The following is a 153-amino-acid chain: Ribonuclease 2 (153 aa).

The protein belongs to the BetVI family.

The protein resides in the cytoplasm. Functionally, catalyzes the two-stage endonucleolytic cleavage to 3'-phosphomononucleotides and 3'-phosphooligonucleotides with 2',3'-cyclic phosphate intermediates. The polypeptide is Ribonuclease 2 (Panax ginseng (Korean ginseng)).